A 61-amino-acid chain; its full sequence is Short neurotoxin 1 (61 aa).

Cystine bridges form between Cys-3–Cys-23, Cys-17–Cys-40, Cys-42–Cys-53, and Cys-54–Cys-59.

Belongs to the three-finger toxin family. Short-chain subfamily. Type I alpha-neurotoxin sub-subfamily. In terms of tissue distribution, expressed by the venom gland.

It localises to the secreted. In terms of biological role, binds to muscle nicotinic acetylcholine receptor (nAChR) and inhibit acetylcholine from binding to the receptor, thereby impairing neuromuscular transmission. In Naja philippinensis (Philippine cobra), this protein is Short neurotoxin 1.